The sequence spans 260 residues: Spectinomycin 9-adenylyltransferase (260 aa).

The catalysed reaction is spectinomycin + ATP = 9-O-adenylylspectinomycin + diphosphate. Its function is as follows. Mediates bacterial resistance to the antibiotic spectinomycin but not streptomycin. The sequence is that of Spectinomycin 9-adenylyltransferase (ant1) from Staphylococcus aureus (strain Mu50 / ATCC 700699).